Reading from the N-terminus, the 935-residue chain is Protein HIRA (935 aa).

WD repeat units follow at residues 14–58, 72–111, 131–170, 174–213, 222–261, 277–320, and 325–362; these read HDTG…DKKK, ESQS…NSMG, GHSM…DRIT, DIQL…CVKS, IEET…QTWK, RAMP…KPLF, and IFNH…IGEM. Positions 431 to 556 are disordered; it reads SSDIQLTKSM…RNKKRKVPAT (126 aa). The span at 439-468 shows a compositional bias: basic and acidic residues; sequence SMEDNSKENESKNSEKTMMEERNKQIDVRK. Polar residues predominate over residues 480-492; sequence GTTTADPMTSLSS. Positions 520-542 are enriched in acidic residues; sequence DLEDSSDSDDDDEEEEEDMEISD.

It belongs to the WD repeat HIR1 family.

The protein localises to the nucleus. In terms of biological role, required for replication-independent chromatin assembly and for the periodic repression of histone gene transcription during the cell cycle. In Caenorhabditis elegans, this protein is Protein HIRA.